The primary structure comprises 481 residues: NADH-quinone oxidoreductase subunit N (481 aa).

13 helical membrane passes run 9-29, 39-59, 76-96, 104-124, 158-178, 205-225, 232-252, 265-285, 293-313, 318-338, 359-379, 399-419, and 443-463; these read MLPELYLLGSAMIALLLGIVV, AVSMGVVVVLSWWSGVTDHVA, CISRMLVGVAGFVASLLFLCA, FSVVMLFATLGAMTLVQAGHF, FFILSALSSCIMLYGISLVYG, AFVLVGVLFKLAVVPFHMWAV, PMAAMAFFLIVTKSAAILLLA, ILYGIISVSGLSALVGELGAL, LLAYSNIGQLGYVLPVVVLHG, AIFHYVLTSWVINAWIFSVLL, FVAFALVVSMVSAAGFPPFLG, VAFPYVLLVCAVGIVPCFYCF, and LGLTVIAVVCMLLSVIALFLA.

It belongs to the complex I subunit 2 family. As to quaternary structure, NDH-1 is composed of 14 different subunits. Subunits NuoA, H, J, K, L, M, N constitute the membrane sector of the complex.

Its subcellular location is the cell inner membrane. It catalyses the reaction a quinone + NADH + 5 H(+)(in) = a quinol + NAD(+) + 4 H(+)(out). NDH-1 shuttles electrons from NADH, via FMN and iron-sulfur (Fe-S) centers, to quinones in the respiratory chain. The immediate electron acceptor for the enzyme in this species is believed to be ubiquinone. Couples the redox reaction to proton translocation (for every two electrons transferred, four hydrogen ions are translocated across the cytoplasmic membrane), and thus conserves the redox energy in a proton gradient. This Anaplasma marginale (strain Florida) protein is NADH-quinone oxidoreductase subunit N.